A 241-amino-acid polypeptide reads, in one-letter code: 3-oxoacyl-[acyl-carrier-protein] reductase FabG (241 aa).

NADP(+) contacts are provided by residues Gly-13–Gly-16, Ser-38, Lys-57–Val-58, and Asn-83. Position 135 (Ser-135) interacts with substrate. Tyr-148 acts as the Proton acceptor in catalysis. Residues Tyr-148–Lys-152 and Ile-181 each bind NADP(+).

Belongs to the short-chain dehydrogenases/reductases (SDR) family. Homotetramer.

It catalyses the reaction a (3R)-hydroxyacyl-[ACP] + NADP(+) = a 3-oxoacyl-[ACP] + NADPH + H(+). Its pathway is lipid metabolism; fatty acid biosynthesis. In terms of biological role, catalyzes the NADPH-dependent reduction of beta-ketoacyl-ACP substrates to beta-hydroxyacyl-ACP products, the first reductive step in the elongation cycle of fatty acid biosynthesis. The polypeptide is 3-oxoacyl-[acyl-carrier-protein] reductase FabG (fabG) (Rickettsia bellii (strain RML369-C)).